The primary structure comprises 617 residues: tRNA-dihydrouridine(47) synthase [NAD(P)(+)] (617 aa).

A C3H1-type zinc finger spans residues 42-70 (KENNALCPAISIGNECPYKENCKFPHDVE). A disordered region spans residues 160-193 (EEKPDPSSKVSNIPEENRDATSAISEGKETESVS). Residues 245–247 (PLT) and Gln-308 each bind FMN. Cys-340 acts as the Proton donor in catalysis. FMN-binding positions include Lys-380, His-411, 460-462 (NGD), and 483-484 (AR).

This sequence belongs to the Dus family. Dus3 subfamily. Requires FMN as cofactor.

Its subcellular location is the cytoplasm. It is found in the nucleus. It catalyses the reaction 5,6-dihydrouridine(47) in tRNA + NAD(+) = uridine(47) in tRNA + NADH + H(+). The enzyme catalyses 5,6-dihydrouridine(47) in tRNA + NADP(+) = uridine(47) in tRNA + NADPH + H(+). It carries out the reaction a 5,6-dihydrouridine in mRNA + NAD(+) = a uridine in mRNA + NADH + H(+). The catalysed reaction is a 5,6-dihydrouridine in mRNA + NADP(+) = a uridine in mRNA + NADPH + H(+). In terms of biological role, catalyzes the synthesis of dihydrouridine, a modified base, in various RNAs, such as tRNAs and mRNAs. Modifies the uridine in position 47 (U47) in the D-loop of tRNAs. Also able to mediate formation of dihydrouridine outside of the D-loop of tRNAs. Catalyzes the synthesis of dihydrouridine in some mRNAs, thereby affecting their translation. Dus3-mediated dihydrouridylation of the mRNA encoding alpha-tubulin nda2 is required for meiotic chromosome segregation. This chain is tRNA-dihydrouridine(47) synthase [NAD(P)(+)], found in Schizosaccharomyces pombe (strain 972 / ATCC 24843) (Fission yeast).